The sequence spans 338 residues: Thiamine thiazole synthase (338 aa).

A disordered region spans residues 1–43 (MSPVATESMYKPTTINQTAHQQAMDPLKSKQQSNATVNKPAFK). The segment covering 11 to 21 (KPTTINQTAHQ) has biased composition (polar residues). Residues Ala91, 112 to 113 (ES), Gly120, and Cys185 each bind substrate. Cys221 bears the 2,3-didehydroalanine (Cys) mark. Substrate contacts are provided by residues Asp223, His238, Met290, and 300–302 (RMG).

Belongs to the THI4 family. Homooctamer. It depends on Fe cation as a cofactor. During the catalytic reaction, a sulfide is transferred from Cys-221 to a reaction intermediate, generating a dehydroalanine residue. As to expression, highly expressed in haustoria, and only in low amounts in intercellular hyphae. Found in the basal hyphae of the uredia, but not in the pedicels and only at very low levels in uredospores.

Its subcellular location is the cytoplasm. It is found in the nucleus. It carries out the reaction [ADP-thiazole synthase]-L-cysteine + glycine + NAD(+) = [ADP-thiazole synthase]-dehydroalanine + ADP-5-ethyl-4-methylthiazole-2-carboxylate + nicotinamide + 3 H2O + 2 H(+). In terms of biological role, involved in biosynthesis of the thiamine precursor thiazole. Catalyzes the conversion of NAD and glycine to adenosine diphosphate 5-(2-hydroxyethyl)-4-methylthiazole-2-carboxylic acid (ADT), an adenylated thiazole intermediate. The reaction includes an iron-dependent sulfide transfer from a conserved cysteine residue of the protein to a thiazole intermediate. The enzyme can only undergo a single turnover, which suggests it is a suicide enzyme. May have additional roles in adaptation to various stress conditions and in DNA damage tolerance. In Uromyces fabae (Rust fungus), this protein is Thiamine thiazole synthase (THI2).